We begin with the raw amino-acid sequence, 461 residues long: Protein IQ-DOMAIN 2 (461 aa).

The segment at methionine 1–alanine 55 is disordered. The IQ domain occupies glutamate 114–arginine 142. The tract at residues valine 141–asparagine 158 is calmodulin-binding. The tract at residues proline 278–serine 461 is disordered. The segment covering leucine 310–glutamine 345 has biased composition (polar residues). The Nuclear localization signal motif lies at lysine 425–threonine 432.

It belongs to the IQD family. Binds to multiple calmodulin (CaM) in the presence of Ca(2+) and CaM-like proteins.

The protein localises to the nucleus. The protein resides in the cytoplasm. Its subcellular location is the cytoskeleton. Its function is as follows. May be involved in cooperative interactions with calmodulins or calmodulin-like proteins. Recruits calmodulin proteins to microtubules, thus being a potential scaffold in cellular signaling and trafficking. May associate with nucleic acids and regulate gene expression at the transcriptional or post-transcriptional level. This is Protein IQ-DOMAIN 2 from Arabidopsis thaliana (Mouse-ear cress).